We begin with the raw amino-acid sequence, 428 residues long: Glutamate-1-semialdehyde 2,1-aminomutase (428 aa).

Lys265 is modified (N6-(pyridoxal phosphate)lysine).

Belongs to the class-III pyridoxal-phosphate-dependent aminotransferase family. HemL subfamily. Homodimer. It depends on pyridoxal 5'-phosphate as a cofactor.

It localises to the cytoplasm. It catalyses the reaction (S)-4-amino-5-oxopentanoate = 5-aminolevulinate. Its pathway is porphyrin-containing compound metabolism; protoporphyrin-IX biosynthesis; 5-aminolevulinate from L-glutamyl-tRNA(Glu): step 2/2. This chain is Glutamate-1-semialdehyde 2,1-aminomutase, found in Ruthia magnifica subsp. Calyptogena magnifica.